We begin with the raw amino-acid sequence, 425 residues long: MSGSTESKKQPRRRFIGRKSGNSNNDKLTTVAENGNEIIHKQKSRIALGRSVNHVPEDILNDKELNEAIKLLPSNYNFEIHKTVWNIRKYNAKRIALQMPEGLLIYSLIISDILEQFCGVETLVMGDVSYGACCIDDFTARALDCDFIVHYAHSCLVPIDVTKIKVLYVFVTINIQEDHIIKTLQKNFPKGSRIATFGTIQFNPAVHSVRDKLLNDEEHMLYIIPPQIKPLSRGEVLGCTSERLDKEQYDAMVFIGDGRFHLESAMIHNPEIPAFKYDPYNRKFTREGYDQKQLVEVRAEAIEVARKGKVFGLILGALGRQGNLNTVKNLEKNLIAAGKTVVKIILSEVFPQKLAMFDQIDVFVQVACPRLSIDWGYAFNKPLLTPYEASVLLKKDVMFSEKYYPMDYYEAKGYGRGETPKHAIE.

A disordered region spans residues 1 to 29 (MSGSTESKKQPRRRFIGRKSGNSNNDKLT). The tract at residues 1-60 (MSGSTESKKQPRRRFIGRKSGNSNNDKLTTVAENGNEIIHKQKSRIALGRSVNHVPEDIL) is required for function but dispensable for interaction with DPH2 and DPH3. A compositionally biased stretch (polar residues) spans 20-29 (SGNSNNDKLT). Position 44 is a phosphoserine (serine 44). [4Fe-4S] cluster is bound by residues cysteine 133, cysteine 239, and cysteine 368. The required for function but dispensable for interaction with DPH2 and DPH3 stretch occupies residues 366-425 (VACPRLSIDWGYAFNKPLLTPYEASVLLKKDVMFSEKYYPMDYYEAKGYGRGETPKHAIE).

This sequence belongs to the DPH1/DPH2 family. DPH1 subfamily. As to quaternary structure, component of the 2-(3-amino-3-carboxypropyl)histidine synthase complex composed of DPH1, DPH2, KTI11/DPH3 and a NADH-dependent reductase, predominantly CBR1. Interacts with DPH2; the interaction is direct. Interacts with KTI11/DPH3. It depends on [4Fe-4S] cluster as a cofactor.

Its subcellular location is the cytoplasm. The enzyme catalyses L-histidyl-[translation elongation factor 2] + S-adenosyl-L-methionine = 2-[(3S)-amino-3-carboxypropyl]-L-histidyl-[translation elongation factor 2] + S-methyl-5'-thioadenosine + H(+). It participates in protein modification; peptidyl-diphthamide biosynthesis. Its function is as follows. Catalyzes the first step of diphthamide biosynthesis, a post-translational modification of histidine which occurs in elongation factor 2. In association with DPH2, transfers a 3-amino-3-carboxypropyl (ACP) group from S-adenosyl-L-methionine (SAM) to a histidine residue, the reaction is assisted by a reduction system comprising KTI11/DPH3 and a NADH-dependent reductase, predominantly CBR1. This Saccharomyces cerevisiae (strain ATCC 204508 / S288c) (Baker's yeast) protein is 2-(3-amino-3-carboxypropyl)histidine synthase subunit 1 (DPH1).